The following is a 496-amino-acid chain: Bifunctional protein HldE (496 aa).

The interval 1–335 (MIKHNPPSPE…GALFRSHGPT (335 aa)) is ribokinase. 211-214 (NRKE) contacts ATP. Residue D280 is part of the active site. A cytidylyltransferase region spans residues 363 to 496 (FTNGCFDILH…IGKLRAGSTS (134 aa)).

This sequence in the N-terminal section; belongs to the carbohydrate kinase PfkB family. In the C-terminal section; belongs to the cytidylyltransferase family. As to quaternary structure, homodimer.

The enzyme catalyses D-glycero-beta-D-manno-heptose 7-phosphate + ATP = D-glycero-beta-D-manno-heptose 1,7-bisphosphate + ADP + H(+). It carries out the reaction D-glycero-beta-D-manno-heptose 1-phosphate + ATP + H(+) = ADP-D-glycero-beta-D-manno-heptose + diphosphate. It functions in the pathway nucleotide-sugar biosynthesis; ADP-L-glycero-beta-D-manno-heptose biosynthesis; ADP-L-glycero-beta-D-manno-heptose from D-glycero-beta-D-manno-heptose 7-phosphate: step 1/4. Its pathway is nucleotide-sugar biosynthesis; ADP-L-glycero-beta-D-manno-heptose biosynthesis; ADP-L-glycero-beta-D-manno-heptose from D-glycero-beta-D-manno-heptose 7-phosphate: step 3/4. Functionally, catalyzes the phosphorylation of D-glycero-D-manno-heptose 7-phosphate at the C-1 position to selectively form D-glycero-beta-D-manno-heptose-1,7-bisphosphate. In terms of biological role, catalyzes the ADP transfer from ATP to D-glycero-beta-D-manno-heptose 1-phosphate, yielding ADP-D-glycero-beta-D-manno-heptose. In Mesorhizobium japonicum (strain LMG 29417 / CECT 9101 / MAFF 303099) (Mesorhizobium loti (strain MAFF 303099)), this protein is Bifunctional protein HldE.